We begin with the raw amino-acid sequence, 471 residues long: 3-isopropylmalate dehydratase large subunit (471 aa).

[4Fe-4S] cluster-binding residues include Cys-347, Cys-407, and Cys-410.

The protein belongs to the aconitase/IPM isomerase family. LeuC type 1 subfamily. In terms of assembly, heterodimer of LeuC and LeuD. [4Fe-4S] cluster serves as cofactor.

It carries out the reaction (2R,3S)-3-isopropylmalate = (2S)-2-isopropylmalate. It functions in the pathway amino-acid biosynthesis; L-leucine biosynthesis; L-leucine from 3-methyl-2-oxobutanoate: step 2/4. Catalyzes the isomerization between 2-isopropylmalate and 3-isopropylmalate, via the formation of 2-isopropylmaleate. The polypeptide is 3-isopropylmalate dehydratase large subunit (Geobacillus sp. (strain WCH70)).